The primary structure comprises 399 residues: Mycinamicin VI 2''-O-methyltransferase (399 aa).

S-adenosyl-L-methionine is bound by residues Thr-173, 202-208, Ser-217, Asp-234, 252-253, and Asp-275; these read EIGVGGY and DQ. Mg(2+) is bound at residue Asp-275. His-278 serves as the catalytic Proton acceptor. Positions 303 and 304 each coordinate Mg(2+).

It belongs to the methyltransferase OleY/MycE family. In terms of assembly, homotetramer. It depends on Mg(2+) as a cofactor.

The catalysed reaction is mycinamicin VI + S-adenosyl-L-methionine = mycinamicin III + S-adenosyl-L-homocysteine + H(+). It participates in antibiotic biosynthesis; mycinamicin biosynthesis. O-methyltransferase that catalyzes the conversion of mycinamicin VI to mycinamicin III in the biosynthesis of mycinamicin, a 16-membered macrolide antibiotic. The chain is Mycinamicin VI 2''-O-methyltransferase (mycE) from Micromonospora griseorubida.